The primary structure comprises 88 residues: Small ribosomal subunit protein bS20 (88 aa).

Belongs to the bacterial ribosomal protein bS20 family.

Its function is as follows. Binds directly to 16S ribosomal RNA. The sequence is that of Small ribosomal subunit protein bS20 from Rhodopseudomonas palustris (strain BisB18).